Here is a 157-residue protein sequence, read N- to C-terminus: Arginine repressor (157 aa).

Belongs to the ArgR family.

Its subcellular location is the cytoplasm. Its pathway is amino-acid biosynthesis; L-arginine biosynthesis [regulation]. Functionally, regulates arginine biosynthesis genes. This chain is Arginine repressor, found in Colwellia psychrerythraea (strain 34H / ATCC BAA-681) (Vibrio psychroerythus).